The chain runs to 208 residues: Small ribosomal subunit protein uS4 (208 aa).

The segment at 31–51 (SALDKRAYGPGQHGQRRAKTS) is disordered. In terms of domain architecture, S4 RNA-binding spans 98–156 (RRLDNVVYRMGFATTRSSARQLVTHGHVLVDGKRLDIPSYFVRSGQKIEIKEKTKSNPQ).

The protein belongs to the universal ribosomal protein uS4 family. Part of the 30S ribosomal subunit. Contacts protein S5. The interaction surface between S4 and S5 is involved in control of translational fidelity.

Functionally, one of the primary rRNA binding proteins, it binds directly to 16S rRNA where it nucleates assembly of the body of the 30S subunit. Its function is as follows. With S5 and S12 plays an important role in translational accuracy. The protein is Small ribosomal subunit protein uS4 of Helicobacter pylori (strain HPAG1).